We begin with the raw amino-acid sequence, 288 residues long: Small ribosomal subunit protein uS2 (288 aa).

Belongs to the universal ribosomal protein uS2 family. In terms of assembly, component of the small ribosomal subunit. Mature ribosomes consist of a small (40S) and a large (60S) subunit. The 40S subunit contains about 33 different proteins and 1 molecule of RNA (18S). The 60S subunit contains about 49 different proteins and 3 molecules of RNA (28S, 5.8S and 5S). Interacts with ribosomal protein S21.

It is found in the cytoplasm. Functionally, required for the assembly and/or stability of the 40S ribosomal subunit. Required for the processing of the 20S rRNA-precursor to mature 18S rRNA in a late step of the maturation of 40S ribosomal subunits. This chain is Small ribosomal subunit protein uS2, found in Aedes aegypti (Yellowfever mosquito).